Consider the following 504-residue polypeptide: CDK5 regulatory subunit-associated protein 3 (504 aa).

Short sequence motifs (shuffled ATG8-binding motif) lie at residues 266-269 (IDWG), 290-293 (IDWG), and 308-311 (IDWG). Residues 268–504 (WGDFGLEAVS…RPVNLMGTSV (237 aa)) form a required for interaction with UFL1 and mediates interaction with CHEK1 region. An RPL10a-binding domain (RBD) region spans residues 353 to 368 (DELMELEIFLSQRAVE). A Glycyl lysine isopeptide (Lys-Gly) (interchain with G-Cter in SUMO2) cross-link involves residue Lys448.

The protein belongs to the CDK5RAP3 family. As to quaternary structure, substrate adapter component of the UFM1 ribosome E3 ligase (UREL) complex, composed of UFL1, DDRGK1 and CDK5RAP3. Interaction with UFL1 anchors CDK5RAP3 in the cytoplasm, preventing its translocation to the nucleus which allows expression of the CCND1 cyclin and progression of cells through the G1/S transition. Interacts with ATG8 family proteins MAP1LC3A, MAP1LC3B, GABARAP, GABARAPL1 and GABARAPL2. Interacts with CDK5R1; competes with CDK5RAP1 and CDK5RAP2. Interacts with RELA. Interacts with CHEK1; may negatively regulate CHEK1 and thereby stimulate entry into mitosis. Interacts with CDKN2A/ARF and MDM2; forms a ternary complex involved in regulation of p53/TP53. Interacts with MAPK14. Interacts with CCNB1. Interacts with TUBG1; may regulate CDK5RAP3 in mitotic G2/M transition checkpoint. In terms of processing, may be phosphorylated by CDK5. Post-translationally, ubiquitinated. Probably triggers proteasomal degradation and is negatively regulated by UFL1. May be ufmylated. In terms of processing, cleaved by caspases early during apoptosis, the resulting peptides may play a role in rupture of the nuclear envelope. As to expression, expressed in vascular endothelium. Up-regulated in failing heart. Highly expressed in the ventricular section in subacute and chronic ischemic heart failure.

The protein localises to the endoplasmic reticulum membrane. It localises to the cytoplasm. The protein resides in the nucleus. It is found in the cytoskeleton. Its subcellular location is the microtubule organizing center. The protein localises to the centrosome. In terms of biological role, substrate adapter of E3 ligase complexes mediating ufmylation, the covalent attachment of the ubiquitin-like modifier UFM1 to substrate proteins, and which is involved in various processes, such as ribosome recycling and reticulophagy (also called ER-phagy). As part of the UREL complex, plays a key role in ribosome recycling by promoting mono-ufmylation of RPL26/uL24 subunit of the 60S ribosome. Ufmylation of RPL26/uL24 occurs on free 60S ribosomes following ribosome dissociation: it weakens the junction between post-termination 60S subunits and SEC61 translocons, promoting release and recycling of the large ribosomal subunit from the endoplasmic reticulum membrane. Ufmylation of RPL26/uL24 and subsequent 60S ribosome recycling either take place after normal termination of translation or after ribosome stalling during cotranslational translocation at the endoplasmic reticulum. Within the UREL complex, CDK5RAP3 acts as a substrate adapter that constrains UFL1 ligase activity to mono-ufmylate RPL26/uL24 at 'Lys-134'. The UREL complex is also involved in reticulophagy in response to endoplasmic reticulum stress by promoting ufmylation of proteins such as CYB5R3, thereby promoting lysosomal degradation of ufmylated proteins. Also acts as a regulator of transcription: negatively regulates NF-kappa-B-mediated gene transcription through the control of RELA phosphorylation. Also regulates mitotic G2/M transition checkpoint and mitotic G2 DNA damage checkpoint. Through its interaction with CDKN2A/ARF and MDM2 may induce MDM2-dependent p53/TP53 ubiquitination, stabilization and activation in the nucleus, thereby promoting G1 cell cycle arrest and inhibition of cell proliferation. May also play a role in the rupture of the nuclear envelope during apoptosis. May regulate MAPK14 activity by regulating its dephosphorylation by PPM1D/WIP1. Required for liver development. In Rattus norvegicus (Rat), this protein is CDK5 regulatory subunit-associated protein 3.